We begin with the raw amino-acid sequence, 638 residues long: Sorting nexin-41 (638 aa).

A compositionally biased stretch (low complexity) spans methionine 1–proline 14. The segment at methionine 1–proline 69 is disordered. Over residues proline 15–arginine 30 the composition is skewed to pro residues. Residues glycine 84 to tryptophan 201 enclose the PX domain. A 1,2-diacyl-sn-glycero-3-phospho-(1D-myo-inositol-3-phosphate) is bound by residues arginine 118, serine 120, lysine 144, and arginine 168. Disordered stretches follow at residues lysine 215–proline 239, leucine 408–alanine 432, and proline 545–leucine 638. Low complexity predominate over residues proline 225–proline 239. The segment covering glutamate 423–alanine 432 has biased composition (basic and acidic residues). Positions glutamine 552–serine 562 are enriched in low complexity. Residues methionine 585–leucine 601 are compositionally biased toward basic and acidic residues.

It belongs to the sorting nexin family.

It localises to the endosome membrane. The protein resides in the endomembrane system. May be required for cytoplasm to vacuole transport (Cvt) and pexophagy. The polypeptide is Sorting nexin-41 (SNX41) (Cryptococcus neoformans var. neoformans serotype D (strain JEC21 / ATCC MYA-565) (Filobasidiella neoformans)).